A 208-amino-acid polypeptide reads, in one-letter code: MYEYKFDVRVGSKIINCRAFTLKEYLELITAKNNGSVEVIVKKLIKDCTNAKDLNRQESELLLIHLWAHSLGEVNHENSWKCTCGTEIPTHINLLHTQIDAPEDLWYTLGDIKIKFRYPKIFDDKNIAHMIVSCIETIHANGESIPVEDLNEKELEDLYSIITESDIVAIKDMLLKPTVYLAVPIKCPECGKTHAHVIRGLKEFFELL.

Residues 1–5 (MYEYK) constitute a propeptide that is removed on maturation.

Its subcellular location is the virion. Functionally, baseplate hub assembly chaperone involved in the tail assembly. This Escherichia coli (Bacteriophage T4) protein is Baseplate hub assembly protein gp26 (26).